Here is a 597-residue protein sequence, read N- to C-terminus: Proteasome-associated ATPase (597 aa).

Residues 1-12 are compositionally biased toward basic and acidic residues; that stretch reads MQHDRPGSRPEE. The tract at residues 1–22 is disordered; that stretch reads MQHDRPGSRPEEGGEQQIGGDA. Positions 21 to 97 form a coiled coil; the sequence is DAELNSQIRL…REEVDRLAQP (77 aa). 284–289 is an ATP binding site; that stretch reads GCGKTL. Residues 596–597 form a docks into pockets in the proteasome alpha-ring region; sequence YL.

The protein belongs to the AAA ATPase family. In terms of assembly, homohexamer. Assembles into a hexameric ring structure that caps the 20S proteasome core. Strongly interacts with the prokaryotic ubiquitin-like protein Pup through a hydrophobic interface; the interacting region of ARC lies in its N-terminal coiled-coil domain. There is one Pup binding site per ARC hexamer ring. Upon ATP-binding, the C-terminus of ARC interacts with the alpha-rings of the proteasome core, possibly by binding to the intersubunit pockets.

Its pathway is protein degradation; proteasomal Pup-dependent pathway. Functionally, ATPase which is responsible for recognizing, binding, unfolding and translocation of pupylated proteins into the bacterial 20S proteasome core particle. May be essential for opening the gate of the 20S proteasome via an interaction with its C-terminus, thereby allowing substrate entry and access to the site of proteolysis. Thus, the C-termini of the proteasomal ATPase may function like a 'key in a lock' to induce gate opening and therefore regulate proteolysis. The polypeptide is Proteasome-associated ATPase (Saccharopolyspora erythraea (strain ATCC 11635 / DSM 40517 / JCM 4748 / NBRC 13426 / NCIMB 8594 / NRRL 2338)).